Here is a 360-residue protein sequence, read N- to C-terminus: Histidinol-phosphate aminotransferase (360 aa).

At Lys218 the chain carries N6-(pyridoxal phosphate)lysine.

It belongs to the class-II pyridoxal-phosphate-dependent aminotransferase family. Histidinol-phosphate aminotransferase subfamily. As to quaternary structure, homodimer. Requires pyridoxal 5'-phosphate as cofactor.

The enzyme catalyses L-histidinol phosphate + 2-oxoglutarate = 3-(imidazol-4-yl)-2-oxopropyl phosphate + L-glutamate. The protein operates within amino-acid biosynthesis; L-histidine biosynthesis; L-histidine from 5-phospho-alpha-D-ribose 1-diphosphate: step 7/9. This chain is Histidinol-phosphate aminotransferase, found in Pelagibacter ubique (strain HTCC1062).